The primary structure comprises 479 residues: Probable periplasmic serine endoprotease DegP-like (479 aa).

The first 27 residues, M1–A27, serve as a signal peptide directing secretion. Residues H118, D148, and S221 each act as charge relay system in the active site. Substrate is bound by residues G219–S221 and L276–I280. PDZ domains lie at L265–G356 and K362–G468. Positions M368–R390 are disordered.

This sequence belongs to the peptidase S1C family.

The protein localises to the periplasm. It carries out the reaction Acts on substrates that are at least partially unfolded. The cleavage site P1 residue is normally between a pair of hydrophobic residues, such as Val-|-Val.. Might be efficient in the degradation of transiently denatured and unfolded proteins which accumulate in the periplasm following stress conditions. This is Probable periplasmic serine endoprotease DegP-like from Pseudomonas fulva (strain 12-X).